The primary structure comprises 557 residues: Acetylcholine receptor subunit alpha-L1 (557 aa).

Residues 1–23 form the signal peptide; that stretch reads MAAALPPMLLLLLLLLLHHPAAA. Over 24–244 the chain is Extracellular; the sequence is NPDAKRLYDD…NITLRRKTLF (221 aa). A glycan (N-linked (GlcNAc...) asparagine) is linked at asparagine 47. Disulfide bonds link cysteine 151-cysteine 165 and cysteine 224-cysteine 225. Asparagine 235 carries N-linked (GlcNAc...) asparagine glycosylation. The next 3 helical transmembrane spans lie at 245 to 266, 274 to 294, and 308 to 329; these read YTVN…VFYL, IALC…ISEI, and YLLF…VLNV. Residues 330–500 are Cytoplasmic-facing; sequence HYRKPSTHKM…EFDAEDQDWG (171 aa). A helical transmembrane segment spans residues 501–523; it reads FVAMVLDRLFLWIFTIASIVGTF.

The protein belongs to the ligand-gated ion channel (TC 1.A.9) family. Acetylcholine receptor (TC 1.A.9.1) subfamily.

The protein resides in the postsynaptic cell membrane. It is found in the cell membrane. Its function is as follows. After binding acetylcholine, the AChR responds by an extensive change in conformation that affects all subunits and leads to opening of an ion-conducting channel across the plasma membrane. The protein is Acetylcholine receptor subunit alpha-L1 of Schistocerca gregaria (Desert locust).